A 643-amino-acid polypeptide reads, in one-letter code: Inorganic pyrophosphatase TTM1 (643 aa).

A mitochondrion-targeting transit peptide spans 1-15; it reads MALDSSVALSPRRRH. The CYTH domain maps to 248–410; the sequence is NPTYILKSSK…PHTYIEQIQL (163 aa). The helical transmembrane segment at 618–638 threads the bilayer; that stretch reads LESSTVPILLGLAIGCVGIFA.

The cofactor is Mg(2+). Ubiquitously expressed in all tissues, with strong expression detected in senescent leaves.

It localises to the mitochondrion outer membrane. It catalyses the reaction diphosphate + H2O = 2 phosphate + H(+). Exhibits pyrophosphatase activity with stronger affinity for pyrophosphate (PPi), moderate affinity for ATP and ADP, and weak affinity for tripolyphosphate (PPPi). No activity observed toward uridine substrate. Positively regulates natural and dark-induced leaf senescence. The polypeptide is Inorganic pyrophosphatase TTM1 (Arabidopsis thaliana (Mouse-ear cress)).